The sequence spans 829 residues: pre-rRNA 2'-O-ribose RNA methyltransferase FTSJ3 (829 aa).

Positions 56, 58, 76, 92, and 117 each coordinate S-adenosyl-L-methionine. Catalysis depends on lysine 157, which acts as the Proton acceptor. The disordered stretch occupies residues 332–367; that stretch reads ISLSSEEEGDEEESAAETKQASEEEEEREEEEQLNR. Phosphoserine occurs at positions 333, 335, 336, 345, and 353. The segment covering 336 to 346 has biased composition (acidic residues); that stretch reads SEEEGDEEESA. Positions 354-363 are enriched in acidic residues; sequence EEEEEREEEE. Arginine 389 is subject to Citrulline. Disordered regions lie at residues 443-508 and 528-634; these read FLSD…PLLV and DGFS…GFEV. Positions 456-473 are enriched in acidic residues; it reads DAEDDDDTSLESDLDPEE. A phosphoserine mark is found at serine 531 and serine 544. Lysine 570 participates in a covalent cross-link: Glycyl lysine isopeptide (Lys-Gly) (interchain with G-Cter in SUMO2). At serine 575 the chain carries Phosphoserine. Glycyl lysine isopeptide (Lys-Gly) (interchain with G-Cter in SUMO2) cross-links involve residues lysine 626 and lysine 642. Serine 659 carries the phosphoserine modification. Residue lysine 661 forms a Glycyl lysine isopeptide (Lys-Gly) (interchain with G-Cter in SUMO2) linkage. Phosphoserine is present on serine 671. Lysine 693 participates in a covalent cross-link: Glycyl lysine isopeptide (Lys-Gly) (interchain with G-Cter in SUMO2). Residues 722-760 are a coiled coil; that stretch reads IKKVAEAKARKKRRMLKKLEQTKKKAEAVVNTVDISERE. The residue at position 766 (arginine 766) is a Citrulline. The span at 794-804 shows a compositional bias: basic residues; sequence VRRPAGVRGHF. Positions 794–829 are disordered; it reads VRRPAGVRGHFKVVDSRMKKDQRAQRKEQKRNHRRK. Basic and acidic residues predominate over residues 805–820; that stretch reads KVVDSRMKKDQRAQRK.

Belongs to the class I-like SAM-binding methyltransferase superfamily. RNA methyltransferase RlmE family. SPB1 subfamily. As to quaternary structure, interacts with NIP7. Citrullinated by PADI4.

The protein resides in the nucleus. Its subcellular location is the nucleolus. The catalysed reaction is a ribonucleotide in rRNA + S-adenosyl-L-methionine = a 2'-O-methylribonucleotide in rRNA + S-adenosyl-L-homocysteine + H(+). RNA 2'-O-methyltransferase involved in the processing of the 34S pre-rRNA to 18S rRNA and in 40S ribosomal subunit formation. The sequence is that of pre-rRNA 2'-O-ribose RNA methyltransferase FTSJ3 (Ftsj3) from Rattus norvegicus (Rat).